The following is a 149-amino-acid chain: MTTVTLIGTRLADTGREFVYQGESPDCEGCPYRSQCLNLSEGTRYRVTGIRENAQTLDCAVHDAGVRAVEVEPAPVPANVLSKQAYAGGRVSLAGPCPHTECPSHGYCVPDGADFDDERVIDQVLGEPPHDVCALDRDLTLVEFRAEDG.

The protein belongs to the UPF0179 family.

In Halorubrum lacusprofundi (strain ATCC 49239 / DSM 5036 / JCM 8891 / ACAM 34), this protein is UPF0179 protein Hlac_2319.